The following is a 225-amino-acid chain: Insulin-induced gene 2 protein (225 aa).

The Cytoplasmic segment spans residues 1–28 (MAEGETESPGPKKCGPYISSVTSQSVNL). Residues 29–51 (MIRGVVLFFIGVFLALVLNLLQI) traverse the membrane as a helical segment. Topologically, residues 52 to 70 (QRNVTLFPPDVIASIFSSA) are lumenal. The chain crosses the membrane as a helical span at residues 71–88 (WWVPPCCGTASAVIGLLY). Over 89 to 103 (PCIDRHLGEPHKFKR) the chain is Cytoplasmic. The chain crosses the membrane as a helical span at residues 104 to 126 (EWSSVMRCVAVFVGINHASAKVD). The Lumenal portion of the chain corresponds to 127-129 (FDN). Residues 130 to 148 (NIQLSLTLAALSIGLWWTF) traverse the membrane as a helical segment. Topologically, residues 149–153 (DRSRS) are cytoplasmic. A Phosphoserine; by PCK1 modification is found at S151. The chain crosses the membrane as a helical span at residues 154 to 175 (GFGLGVGIAFLATVVTQLLVYN). The Lumenal segment spans residues 176–189 (GVYQYTSPDFLYVR). Residues 190-207 (SWLPCIFFAGGITMGNIG) traverse the membrane as a helical segment. Over 208–225 (RQLAMYECKVIAEKSHQE) the chain is Cytoplasmic. A Cysteine sulfenic acid (-SOH); alternate modification is found at C215. C215 participates in a covalent cross-link: Glycyl cysteine thioester (Cys-Gly) (interchain with G-Cter in ubiquitin); alternate. The short motif at 219–225 (AEKSHQE) is the KxHxx element.

The protein belongs to the INSIG family. As to quaternary structure, interacts with SCAP; interaction is direct and only takes place in the presence of sterols; it prevents interaction between SCAP and the coat protein complex II (COPII). Associates with the SCAP-SREBP complex (composed of SCAP and SREBF1/SREBP1 or SREBF2/SREBP2); association is mediated via its interaction with SCAP and only takes place in the presence of sterols. Interacts with RNF139. Interacts with RNF145. In terms of processing, phosphorylation at Ser-151 by PCK1 reduces binding to oxysterol, disrupting the interaction between INSIG2 and SCAP, thereby promoting nuclear translocation of SREBP proteins (SREBF1/SREBP1 or SREBF2/SREBP2) and subsequent transcription of downstream lipogenesis-related genes. Polyubiquitinated by AMFR/gp78 at Cys-215 in some tissues such as adipose tissues, undifferentiated myoblasts and liver, leading to its degradation. In differentiated myotubes, Cys-215 oxidation prevents ubiquitination at the same site, resulting in protein stabilization. Post-translationally, oxidized at Cys-215 in differentiated myotubes, preventing ubiquitination at the same site, and resulting in protein stabilization.

Its subcellular location is the endoplasmic reticulum membrane. Oxysterol-binding protein that mediates feedback control of cholesterol synthesis by controlling both endoplasmic reticulum to Golgi transport of SCAP and degradation of HMGCR. Acts as a negative regulator of cholesterol biosynthesis by mediating the retention of the SCAP-SREBP complex in the endoplasmic reticulum, thereby blocking the processing of sterol regulatory element-binding proteins (SREBPs) SREBF1/SREBP1 and SREBF2/SREBP2. Binds oxysterol, including 22-hydroxycholesterol, 24-hydroxycholesterol, 25-hydroxycholesterol and 27-hydroxycholesterol, regulating interaction with SCAP and retention of the SCAP-SREBP complex in the endoplasmic reticulum. In presence of oxysterol, interacts with SCAP, retaining the SCAP-SREBP complex in the endoplasmic reticulum, thereby preventing SCAP from escorting SREBF1/SREBP1 and SREBF2/SREBP2 to the Golgi. Sterol deprivation or phosphorylation by PCK1 reduce oxysterol-binding, disrupting the interaction between INSIG2 and SCAP, thereby promoting Golgi transport of the SCAP-SREBP complex, followed by processing and nuclear translocation of SREBF1/SREBP1 and SREBF2/SREBP2. Also regulates cholesterol synthesis by regulating degradation of HMGCR: initiates the sterol-mediated ubiquitin-mediated endoplasmic reticulum-associated degradation (ERAD) of HMGCR via recruitment of the reductase to the ubiquitin ligase RNF139. The sequence is that of Insulin-induced gene 2 protein from Homo sapiens (Human).